The sequence spans 384 residues: Dual-specificity RNA methyltransferase RlmN (384 aa).

The active-site Proton acceptor is E105. The Radical SAM core domain occupies 111-350 (EDDRATLCVS…TIVRKTRGDD (240 aa)). A disulfide bridge links C118 with C355. C125, C129, and C132 together coordinate [4Fe-4S] cluster. S-adenosyl-L-methionine-binding positions include 179–180 (GE), S211, 233–235 (SLH), and N312. C355 acts as the S-methylcysteine intermediate in catalysis.

It belongs to the radical SAM superfamily. RlmN family. Requires [4Fe-4S] cluster as cofactor.

The protein localises to the cytoplasm. It catalyses the reaction adenosine(2503) in 23S rRNA + 2 reduced [2Fe-2S]-[ferredoxin] + 2 S-adenosyl-L-methionine = 2-methyladenosine(2503) in 23S rRNA + 5'-deoxyadenosine + L-methionine + 2 oxidized [2Fe-2S]-[ferredoxin] + S-adenosyl-L-homocysteine. The enzyme catalyses adenosine(37) in tRNA + 2 reduced [2Fe-2S]-[ferredoxin] + 2 S-adenosyl-L-methionine = 2-methyladenosine(37) in tRNA + 5'-deoxyadenosine + L-methionine + 2 oxidized [2Fe-2S]-[ferredoxin] + S-adenosyl-L-homocysteine. Its function is as follows. Specifically methylates position 2 of adenine 2503 in 23S rRNA and position 2 of adenine 37 in tRNAs. m2A2503 modification seems to play a crucial role in the proofreading step occurring at the peptidyl transferase center and thus would serve to optimize ribosomal fidelity. The protein is Dual-specificity RNA methyltransferase RlmN of Escherichia coli O6:H1 (strain CFT073 / ATCC 700928 / UPEC).